We begin with the raw amino-acid sequence, 1851 residues long: Voltage-dependent calcium channel type A subunit alpha-1 (1851 aa).

Topologically, residues 1-38 (MGGPKKEENPPGGGPTSLFILTEDNPIRKYTRFIIEWP) are cytoplasmic. The stretch at 25–316 (NPIRKYTRFI…LVLGVLSGEF (292 aa)) is one I repeat. The helical transmembrane segment at 39–57 (PFEYAVLLTIIANCVVLAL) threads the bilayer. Over 58-75 (EEHLPGGDKTVLAQKLEK) the chain is Extracellular. The helical transmembrane segment at 76-95 (TEAYFLCIFCVEASLKILAL) threads the bilayer. The Cytoplasmic segment spans residues 96–107 (GLVLHKHSYLRN). Residues 108–128 (IWNIMDFFVVVTGFMTQYPQI) traverse the membrane as a helical segment. Over 129–133 (GPEVD) the chain is Extracellular. The chain crosses the membrane as a helical span at residues 134-152 (LRTLRAIRVLRPLKLVSGI). Topologically, residues 153-171 (PSLQVVLKSIIKAMAPLLQ) are cytoplasmic. The helical transmembrane segment at 172 to 191 (IGLLVLFAIVIFAIIGLEFY) threads the bilayer. Topologically, residues 192 to 288 (SGALHKTCYS…WTNDALGSAF (97 aa)) are extracellular. Residues N234 and N235 are each glycosylated (N-linked (GlcNAc...) asparagine). A helical membrane pass occupies residues 289–313 (NWIYFVPLIVIGSFFMLNLVLGVLS). Over 314-441 (GEFSNERNRV…FWIRHTVKTQ (128 aa)) the chain is Cytoplasmic. The interval 381–417 (RKKLKSLGKSKSTDTEEEEAEEDYGDDGYLKTRSKPQ) is disordered. The segment covering 395–406 (TEEEEAEEDYGD) has biased composition (acidic residues). The stretch at 427–670 (EKRFRFWIRH…VFLAIAVDNL (244 aa)) is one II repeat. A helical membrane pass occupies residues 442–460 (WFYWFVIVLVFLNTVCVAV). Residues 461–475 (EHYGQPSFLTEFLYY) lie on the Extracellular side of the membrane. The helical transmembrane segment at 476–495 (AEFIFLGLFMSEMFIKMYAL) threads the bilayer. Over 496–503 (GPRIYFES) the chain is Cytoplasmic. The helical transmembrane segment at 504–522 (SFNRFDCVVISGSIFEVIW) threads the bilayer. Topologically, residues 523-531 (SEVKGGSFG) are extracellular. Residues 532–550 (LSVLRALRLLRIFKVTKYW) traverse the membrane as a helical segment. Residues 551 to 569 (SSLRNLVISLLNSMRSIIS) lie on the Cytoplasmic side of the membrane. A helical transmembrane segment spans residues 570–589 (LLFLLFLFILIFALLGMQLF). At 590 to 642 (GGQFNLPGGTPETNFNTFPIALLTVFQILTGEDWNEVMYQGIISQGGAQKGMI) the chain is on the extracellular side. Residues 643–667 (YSIYFIVLVLFGNYTLLNVFLAIAV) form a helical membrane-spanning segment. Topologically, residues 668 to 767 (DNLANAQELT…IRRGAHWVVN (100 aa)) are cytoplasmic. Residues 710–741 (ENGDGAVAPSKSKGKKKEEEKKEEEEVTEGPK) form a disordered region. The stretch at 762 to 1049 (AHWVVNLPYF…IITFQEQGEA (288 aa)) is one III repeat. Residues 768 to 786 (LPYFDFFIMVVISMSSIAL) traverse the membrane as a helical segment. The Extracellular portion of the chain corresponds to 787-802 (AAEDPVRENSRRNKIL). The helical transmembrane segment at 803-822 (NYFDYAFTGVFTIEMLLKIV) threads the bilayer. At 823-834 (DLGVILHPGSYL) the chain is on the cytoplasmic side. Residues 835-853 (REFWNIMDAVVVICAAVSF) traverse the membrane as a helical segment. Residues 854–866 (GFDMSGSSAGQNL) are Extracellular-facing. N865 is a glycosylation site (N-linked (GlcNAc...) asparagine). Residues 867 to 885 (STIKSLRVLRVLRPLKTIK) traverse the membrane as a helical segment. Over 886–904 (RVPKLKAVFDCVVNSLKNV) the chain is Cytoplasmic. The chain crosses the membrane as a helical span at residues 905–924 (VNILIVYILFQFIFSVIGVQ). Topologically, residues 925–1013 (LFNGKFFYCT…EDRGPIQNFR (89 aa)) are extracellular. A helical membrane pass occupies residues 1014–1038 (IEMSIFYIVYFIVFPFFFVNIFVAL). The Cytoplasmic segment spans residues 1039 to 1093 (IIITFQEQGEAELQDGEIDKNQKSCIDFTIGARPLERYMPKNRNTFKYKVWRIVV). An IV repeat occupies 1086-1347 (YKVWRIVVST…DNFDYLTRDS (262 aa)). Residues 1094-1122 (STPFEYFIMMLIVFNTLLLMMKYHNQGDM) form a helical membrane-spanning segment. At 1123–1127 (YEKSL) the chain is on the extracellular side. Residues 1128–1147 (KYINMGFTGMFSVETVLKII) traverse the membrane as a helical segment. The Cytoplasmic segment spans residues 1148–1155 (GFGVKNFF). The chain crosses the membrane as a helical span at residues 1156 to 1174 (KDPWNIFDLITVLGSIVDA). Residues 1175 to 1184 (LWMEFGHDDS) lie on the Extracellular side of the membrane. A helical transmembrane segment spans residues 1185–1203 (NSINVGFLRLFRAARLIKL). Topologically, residues 1204–1222 (LRQGYTIRILLWTFVQSFK) are cytoplasmic. The helical transmembrane segment at 1223–1242 (ALPYVCLLIAMLFFIYAIIG) threads the bilayer. Over 1243-1308 (MQVFGNIKLG…DAEKAPGEYC (66 aa)) the chain is Extracellular. The segment at 1306-1348 (EYCGSTLAYAYFVSFIFFCSFLMLNLFVAVIMDNFDYLTRDSS) is phenylalkylamine binding. Residues 1309–1333 (GSTLAYAYFVSFIFFCSFLMLNLFV) traverse the membrane as a helical segment. Topologically, residues 1334 to 1851 (AVIMDNFDYL…HSDSDEEDWC (518 aa)) are cytoplasmic. The region spanning 1353 to 1388 (HHLDEFVRIWAEYDPNATGKIHYTEMYDMLKNMDPP) is the EF-hand domain. Positions 1366, 1368, 1370, 1372, and 1377 each coordinate Ca(2+). Disordered regions lie at residues 1513–1572 (DASR…HHDI), 1588–1653 (TRHP…SPAR), 1685–1764 (RAGI…DRDR), and 1823–1851 (VLPSPVLNGFKPKSGLNPRHSDSDEEDWC). Basic residues predominate over residues 1589–1600 (RHPRHGNSHPRY). Positions 1604–1619 (SWSASTSPARSPSPSR) are enriched in low complexity. 2 stretches are compositionally biased toward polar residues: residues 1637-1649 (YGTTSLCQRSRSP) and 1698-1710 (KPSTLQLKPTNIN). Over residues 1734–1764 (HHRDLLRDPRDMYYSSRERERDRERLRDRDR) the composition is skewed to basic and acidic residues.

The protein belongs to the calcium channel alpha-1 subunit (TC 1.A.1.11) family. In terms of tissue distribution, expressed widely in the embryonic nervous system.

The protein resides in the membrane. In terms of biological role, voltage-sensitive calcium channels (VSCC) mediate the entry of calcium ions into excitable cells and are also involved in a variety of calcium-dependent processes, including muscle contraction, neurotransmitter release, gene expression, cell motility, cell division and cell death. Probably encodes a dihydropyridine-insensitive current. Vital for survival to adulthood. The chain is Voltage-dependent calcium channel type A subunit alpha-1 (cac) from Drosophila melanogaster (Fruit fly).